The chain runs to 489 residues: Cytochrome P450 monooxygenase ataF (489 aa).

A helical transmembrane segment spans residues 12–32 (WLEHSAVIATLFAFGTALFLV). N289 is a glycosylation site (N-linked (GlcNAc...) asparagine). Residue C434 coordinates heme.

This sequence belongs to the cytochrome P450 family. The cofactor is heme.

The protein localises to the membrane. It functions in the pathway mycotoxin biosynthesis. In terms of biological role, cytochrome P450 monooxygenase; part of the gene cluster that mediates the biosynthesis of acetylaranotin, a member of the epipolythiodioxopiperazine (ETP) class of toxins characterized by a disulfide-bridged cyclic dipeptide. The first step of acetylaranotin biosynthesis is performed by the NRPS ataP which produces diketopiperazine cyclo-L-Phe-L-Phe via the condensation of 2 phenylalanines (L-Phe). The ataC domain of ataTC then catalyzes the formation of bishydroxylation of cyclo-L-Phe-L-Phe. The glutathione S-transferase domain ataG in ataIMG further catalyzes the conjugation of two glutathiones to the bishydroxylated intermediate. Next, the dipeptidase ataJ removes the Glu residues. The following step is performed by the carbon sulfur lyase domain ataI of ataIMG which may convert the bis-cysteinyl adduct to yield an epidithiol intermediate. The ataT domain from ataTC then catalyzes the oxidation of the free dithiols, followed by a cyclization step catalyzed by the cytochrome P450 ataF. AtaF probably acts as an epoxidase to promote a dual epoxidation formation at C8 and C9 along with C8' and C9', followed by the spontaneous nucleophilic attack of the amide nitrogens N10 and N10' to yield an intermediate with the pyrrolidine partial structure. The final steps of acetylaranotin biosynthesis involve the acetylation and ring rearrangement of an epitetrathiodiketopiperazine intermediate to produce acetylaranotin. AtaH probably catalyzes the acetylation of epitetrathiodiketopiperazine to produce a diacetate and ataY is responsible for the formation of the dihydrooxepin moiety that converts the diacetate intermediate to acetylaranotin via acetylapoaranotin. Both enzymes could function independently in the absence of the other. The acetylaranotin bis-thiomethyltransferase ataS located outside of acetylaranotin gene cluster is the main thiomethyltransferase responsible for converting acetylaranotin and its related intermediates to their methylated forms. This is Cytochrome P450 monooxygenase ataF from Aspergillus terreus (strain NIH 2624 / FGSC A1156).